Reading from the N-terminus, the 493-residue chain is EGF-containing fibulin-like extracellular matrix protein 1 (493 aa).

The N-terminal stretch at 1–17 (MLKALFLTMLTLALVKS) is a signal peptide. In terms of domain architecture, EGF-like 1; atypical spans 26–71 (YTQCTDGYEWDPVRQQCKDIDECDIVPDACKGGMKCVNHYGGYLCL). The EGF-like 2; calcium-binding domain occupies 173-213 (DIDECTAGTHNCRADQVCINLRGSFACQCPPGYQKRGEQCV). Intrachain disulfides connect Cys177-Cys190, Cys184-Cys199, Cys201-Cys212, Cys218-Cys228, Cys224-Cys237, Cys239-Cys252, Cys258-Cys268, Cys264-Cys277, Cys279-Cys292, Cys298-Cys309, Cys305-Cys318, Cys320-Cys332, Cys338-Cys350, Cys344-Cys359, and Cys365-Cys377. One can recognise an EGF-like 3; calcium-binding domain in the interval 214-253 (DIDECTIPPYCHQRCVNTPGSFYCQCSPGFQLAANNYTCV). Asn249 carries N-linked (GlcNAc...) asparagine glycosylation. Residues 254-293 (DINECDASNQCAQQCYNILGSFICQCNQGYELSSDRLNCE) enclose the EGF-like 4; calcium-binding domain. Positions 259–493 (DASNQCAQQC…LTIIVGPFSF (235 aa)) are mediates interaction with TIMP3. Residues 294–333 (DIDECRTSSYLCQYQCVNEPGKFSCMCPQGYQVVRSRTCQ) form the EGF-like 5; calcium-binding domain. In terms of domain architecture, EGF-like 6; calcium-binding spans 334–378 (DINECETTNECREDEMCWNYHGGFRCYPRNPCQDPYILTPENRCV).

This sequence belongs to the fibulin family. As to quaternary structure, interacts with ECM1. Interacts with TIMP3.

It is found in the secreted. It localises to the extracellular space. The protein resides in the extracellular matrix. Binds EGFR, the EGF receptor, inducing EGFR autophosphorylation and the activation of downstream signaling pathways. May play a role in cell adhesion and migration. May function as a negative regulator of chondrocyte differentiation. In the olfactory epithelium, it may regulate glial cell migration, differentiation and the ability of glial cells to support neuronal neurite outgrowth. This is EGF-containing fibulin-like extracellular matrix protein 1 (EFEMP1) from Macaca fascicularis (Crab-eating macaque).